The sequence spans 141 residues: Putative nickel-responsive regulator (141 aa).

Histidine 83, histidine 94, histidine 96, and cysteine 102 together coordinate Ni(2+).

Belongs to the transcriptional regulatory CopG/NikR family. Ni(2+) is required as a cofactor.

Functionally, transcriptional regulator. The chain is Putative nickel-responsive regulator from Methanopyrus kandleri (strain AV19 / DSM 6324 / JCM 9639 / NBRC 100938).